The chain runs to 994 residues: UPF0182 protein Strop_3729 (994 aa).

The next 7 helical transmembrane spans lie at 18 to 38 (IGVL…VQAW), 61 to 81 (LLLF…NLWL), 110 to 130 (IGLW…LSAQ), 174 to 194 (FTAV…FGGI), 209 to 229 (AHLS…YVLD), 260 to 280 (ILAY…NAWM), and 283 to 303 (LVWP…IGGI). Disordered regions lie at residues 891-934 (GEQA…AEAA) and 970-994 (FEQA…SPGG). Positions 897–926 (PSPPPSDDETPPSPTPTPTPTTPSVTPPPL) are enriched in pro residues.

Belongs to the UPF0182 family.

It is found in the cell membrane. The polypeptide is UPF0182 protein Strop_3729 (Salinispora tropica (strain ATCC BAA-916 / DSM 44818 / JCM 13857 / NBRC 105044 / CNB-440)).